A 147-amino-acid polypeptide reads, in one-letter code: Hemoglobin subunit beta (147 aa).

Val2 carries the N-acetylvaline modification. Residues 3–147 (HLSGEEKSAV…VANALAHKYH (145 aa)) enclose the Globin domain. Thr13 bears the Phosphothreonine mark. Ser45 carries the post-translational modification Phosphoserine. Position 60 is an N6-acetyllysine (Lys60). Residue His64 participates in heme b binding. Lys83 carries the N6-acetyllysine modification. His93 contributes to the heme b binding site. Position 94 is an S-nitrosocysteine (Cys94). At Lys145 the chain carries N6-acetyllysine.

Belongs to the globin family. As to quaternary structure, heterotetramer of two alpha chains and two beta chains. In terms of tissue distribution, red blood cells.

Its function is as follows. Involved in oxygen transport from the lung to the various peripheral tissues. The chain is Hemoglobin subunit beta (HBB) from Lepus europaeus (European hare).